Here is a 224-residue protein sequence, read N- to C-terminus: Probable GTP-binding protein EngB (224 aa).

Residues 31-205 (IGVEIAFAGR…LSILNDWCHP (175 aa)) enclose the EngB-type G domain. GTP is bound by residues 39 to 46 (GRSNAGKS), 66 to 70 (GRTQL), 84 to 87 (DLPG), 151 to 154 (TKSD), and 184 to 186 (LSS). Mg(2+) contacts are provided by Ser-46 and Thr-68.

Belongs to the TRAFAC class TrmE-Era-EngA-EngB-Septin-like GTPase superfamily. EngB GTPase family. Mg(2+) is required as a cofactor.

Necessary for normal cell division and for the maintenance of normal septation. The chain is Probable GTP-binding protein EngB from Shewanella frigidimarina (strain NCIMB 400).